The primary structure comprises 231 residues: Probable septum site-determining protein MinC (231 aa).

The protein belongs to the MinC family. In terms of assembly, interacts with MinD and FtsZ.

Cell division inhibitor that blocks the formation of polar Z ring septums. Rapidly oscillates between the poles of the cell to destabilize FtsZ filaments that have formed before they mature into polar Z rings. Prevents FtsZ polymerization. This Baumannia cicadellinicola subsp. Homalodisca coagulata protein is Probable septum site-determining protein MinC.